We begin with the raw amino-acid sequence, 183 residues long: Protein Syd (183 aa).

It belongs to the Syd family.

It localises to the cell inner membrane. Its function is as follows. Interacts with the SecY protein in vivo. May bind preferentially to an uncomplexed state of SecY, thus functioning either as a chelating agent for excess SecY in the cell or as a regulatory factor that negatively controls the translocase function. The chain is Protein Syd from Yersinia pseudotuberculosis serotype O:1b (strain IP 31758).